Reading from the N-terminus, the 282-residue chain is Large ribosomal subunit protein uL2 (282 aa).

The tract at residues 215 to 282 (RHKGIRPTVR…IIRSRKETKK (68 aa)) is disordered. Over residues 263-282 (RNPKKPSTKLIIRSRKETKK) the composition is skewed to basic residues.

This sequence belongs to the universal ribosomal protein uL2 family. As to quaternary structure, part of the 50S ribosomal subunit. Forms a bridge to the 30S subunit in the 70S ribosome.

In terms of biological role, one of the primary rRNA binding proteins. Required for association of the 30S and 50S subunits to form the 70S ribosome, for tRNA binding and peptide bond formation. It has been suggested to have peptidyltransferase activity; this is somewhat controversial. Makes several contacts with the 16S rRNA in the 70S ribosome. The protein is Large ribosomal subunit protein uL2 of Mesomycoplasma hyopneumoniae (strain 7448) (Mycoplasma hyopneumoniae).